The sequence spans 748 residues: Putative pre-mRNA-splicing factor ATP-dependent RNA helicase DHX32 (748 aa).

In terms of domain architecture, Helicase ATP-binding spans 74 to 240; it reads LEHLAHNQIV…YGNAPLVEAE (167 aa). 87–94 provides a ligand contact to ATP; the sequence is AGPKSGKS. The 177-residue stretch at 263-439 folds into the Helicase C-terminal domain; it reads RLLFEIHHTK…SMVLFLKRMD (177 aa). Residues 706 to 748 form a disordered region; that stretch reads SETKDLLQQDQTPDTPPTEEPREEEPLHEANDEGTAEQRCIIQ.

The protein belongs to the DEAD box helicase family. DEAH subfamily.

It is found in the nucleus. The protein localises to the mitochondrion. It carries out the reaction ATP + H2O = ADP + phosphate + H(+). This is Putative pre-mRNA-splicing factor ATP-dependent RNA helicase DHX32 (dhx32) from Xenopus laevis (African clawed frog).